The primary structure comprises 397 residues: Tryptophan synthase beta chain 1 (397 aa).

The residue at position 94 (K94) is an N6-(pyridoxal phosphate)lysine.

It belongs to the TrpB family. Tetramer of two alpha and two beta chains. The cofactor is pyridoxal 5'-phosphate.

The enzyme catalyses (1S,2R)-1-C-(indol-3-yl)glycerol 3-phosphate + L-serine = D-glyceraldehyde 3-phosphate + L-tryptophan + H2O. It participates in amino-acid biosynthesis; L-tryptophan biosynthesis; L-tryptophan from chorismate: step 5/5. Functionally, the beta subunit is responsible for the synthesis of L-tryptophan from indole and L-serine. In Archaeoglobus fulgidus (strain ATCC 49558 / DSM 4304 / JCM 9628 / NBRC 100126 / VC-16), this protein is Tryptophan synthase beta chain 1 (trpB1).